The sequence spans 657 residues: Threonine--tRNA ligase (657 aa).

In terms of domain architecture, TGS spans 7–70 (QQASIAITLP…LCDANIEIVT (64 aa)). Residues 253–555 (DHRKLGTELE…LIEHTAGNFP (303 aa)) are catalytic. Zn(2+) is bound by residues C351, H402, and H532.

This sequence belongs to the class-II aminoacyl-tRNA synthetase family. As to quaternary structure, homodimer. It depends on Zn(2+) as a cofactor.

It is found in the cytoplasm. The enzyme catalyses tRNA(Thr) + L-threonine + ATP = L-threonyl-tRNA(Thr) + AMP + diphosphate + H(+). In terms of biological role, catalyzes the attachment of threonine to tRNA(Thr) in a two-step reaction: L-threonine is first activated by ATP to form Thr-AMP and then transferred to the acceptor end of tRNA(Thr). Also edits incorrectly charged L-seryl-tRNA(Thr). This chain is Threonine--tRNA ligase, found in Chlorobium limicola (strain DSM 245 / NBRC 103803 / 6330).